A 194-amino-acid chain; its full sequence is Protein GrpE (194 aa).

A disordered region spans residues 1–40; that stretch reads MSRKHHKEQEEIQEQETISAGAAETPAEETAAIPAATEAD. The segment covering 20–38 has biased composition (low complexity); it reads AGAAETPAEETAAIPAATE.

The protein belongs to the GrpE family. Homodimer.

The protein localises to the cytoplasm. Its function is as follows. Participates actively in the response to hyperosmotic and heat shock by preventing the aggregation of stress-denatured proteins, in association with DnaK and GrpE. It is the nucleotide exchange factor for DnaK and may function as a thermosensor. Unfolded proteins bind initially to DnaJ; upon interaction with the DnaJ-bound protein, DnaK hydrolyzes its bound ATP, resulting in the formation of a stable complex. GrpE releases ADP from DnaK; ATP binding to DnaK triggers the release of the substrate protein, thus completing the reaction cycle. Several rounds of ATP-dependent interactions between DnaJ, DnaK and GrpE are required for fully efficient folding. The sequence is that of Protein GrpE from Chlorobaculum tepidum (strain ATCC 49652 / DSM 12025 / NBRC 103806 / TLS) (Chlorobium tepidum).